Reading from the N-terminus, the 266-residue chain is Biotin--[acetyl-CoA-carboxylase] ligase (266 aa).

One can recognise a BPL/LPL catalytic domain in the interval 14-202; it reads RSLRDQLIGA…ELEARIIQWR (189 aa). Biotin contacts are provided by residues 38–39, Gln-63, Arg-67, and Lys-138; that span reads ST.

Belongs to the biotin--protein ligase family. In terms of assembly, monomer in solution. Forms dimers under specific crystallization conditions.

The enzyme catalyses biotin + L-lysyl-[protein] + ATP = N(6)-biotinyl-L-lysyl-[protein] + AMP + diphosphate + H(+). It catalyses the reaction biotin + ATP + H(+) = biotinyl-5'-AMP + diphosphate. The catalysed reaction is biotinyl-5'-AMP + L-lysyl-[protein] = N(6)-biotinyl-L-lysyl-[protein] + AMP + 2 H(+). Its activity is regulated as follows. Binding of biotin and ATP significantly increases the thermal stability of BirA and leads to the formation of a high affinity holoenzyme complex. Functionally, catalyzes the transfer of biotin onto a conserved lysine residue of the biotin carboxyl carrier protein (BCCP) domain of acetyl-CoA carboxylase and converts it to active holo-BCCP. Forms an acyl-adenylate intermediate. Cannot use GTP or desthiobiotin. The polypeptide is Biotin--[acetyl-CoA-carboxylase] ligase (Mycobacterium tuberculosis (strain ATCC 25618 / H37Rv)).